The sequence spans 425 residues: MLDQKLIRENPTSVEENLSLRGKVYKISHIHELTVKKKEIDIEISSLQSESKKLSKLISQVIGKSQDNNSQELNDLKKKGNEYRIKISELEEKQRILNKKVDDEIYNLPNFPSKDAPIGKDESENLQIKTWGDPLIKENIKSHWEIGESLNIFDSIKSTKISKSRFITLIGNGARLERALINFMLDMHTKNGYLELMPPALVNSESLTGSGQLPKFSNESFKCSNDDLWLSPTAEVPLTALHRNELIDPKHLPLKYVAYSPCFRREAGSYGRDTKGLIRLHQFNKVELYWFCDPSKSLEAHKEITTDAESILKKLNLPYRLVDICTGDLGFSSSRTFDLEVWLPSSKCYREISSCSNCLDFQARRSSIRSKIDKKNTYIHTLNGSGLAIGRTMAAILENGQQTDGSVKIPDALVPYFGSNLLKTA.

233 to 235 is an L-serine binding site; it reads TAE. Position 264-266 (264-266) interacts with ATP; that stretch reads RRE. Glu287 contacts L-serine. 351 to 354 contributes to the ATP binding site; that stretch reads EISS. Position 385 (Ser385) interacts with L-serine.

Belongs to the class-II aminoacyl-tRNA synthetase family. Type-1 seryl-tRNA synthetase subfamily. In terms of assembly, homodimer. The tRNA molecule binds across the dimer.

The protein localises to the cytoplasm. The enzyme catalyses tRNA(Ser) + L-serine + ATP = L-seryl-tRNA(Ser) + AMP + diphosphate + H(+). It catalyses the reaction tRNA(Sec) + L-serine + ATP = L-seryl-tRNA(Sec) + AMP + diphosphate + H(+). It functions in the pathway aminoacyl-tRNA biosynthesis; selenocysteinyl-tRNA(Sec) biosynthesis; L-seryl-tRNA(Sec) from L-serine and tRNA(Sec): step 1/1. Its function is as follows. Catalyzes the attachment of serine to tRNA(Ser). Is also able to aminoacylate tRNA(Sec) with serine, to form the misacylated tRNA L-seryl-tRNA(Sec), which will be further converted into selenocysteinyl-tRNA(Sec). The sequence is that of Serine--tRNA ligase from Prochlorococcus marinus (strain AS9601).